The sequence spans 358 residues: Probable protein phosphatase 2C 68 (358 aa).

The region spanning 74 to 352 is the PPM-type phosphatase domain; it reads RHGAASVAGR…DNISVVVVDL (279 aa). Mn(2+) is bound by residues Asp117, Gly118, Asp298, and Asp343.

It belongs to the PP2C family. Mg(2+) serves as cofactor. It depends on Mn(2+) as a cofactor.

The protein localises to the nucleus. It localises to the cytoplasm. It is found in the cytosol. The catalysed reaction is O-phospho-L-seryl-[protein] + H2O = L-seryl-[protein] + phosphate. It catalyses the reaction O-phospho-L-threonyl-[protein] + H2O = L-threonyl-[protein] + phosphate. Involved in the regulation of abiotic stress responses. Acts as a negative regulator of abscisic acid (ABA) signaling and positive regulator of abiotic stress signaling. May be involved in panicle development. The polypeptide is Probable protein phosphatase 2C 68 (Oryza sativa subsp. japonica (Rice)).